The sequence spans 327 residues: Zinc transport protein ZntB (327 aa).

The Cytoplasmic portion of the chain corresponds to Met-1 to Ser-271. A helical membrane pass occupies residues Leu-272–Gly-292. The Periplasmic portion of the chain corresponds to Gly-293–Pro-300. Residues Phe-301–Leu-321 traverse the membrane as a helical segment. Topologically, residues Lys-322–Leu-327 are cytoplasmic.

Belongs to the CorA metal ion transporter (MIT) (TC 1.A.35) family.

It is found in the cell inner membrane. The enzyme catalyses Zn(2+)(out) + H(+)(out) = Zn(2+)(in) + H(+)(in). Its function is as follows. Zinc transporter. Acts as a Zn(2+):proton symporter, which likely mediates zinc ion uptake. In Pectobacterium atrosepticum (strain SCRI 1043 / ATCC BAA-672) (Erwinia carotovora subsp. atroseptica), this protein is Zinc transport protein ZntB.